A 745-amino-acid polypeptide reads, in one-letter code: Polyribonucleotide nucleotidyltransferase (745 aa).

The Mg(2+) site is built by aspartate 487 and aspartate 493. The KH domain maps to 554–613 (PRIETMQIPTDKIRDVIGTGGKIIREIVEKTGAKINIEDTGIVKIASSDGKAIKAAYNWI). In terms of domain architecture, S1 motif spans 623–691 (GTIYDGTIVK…ERGKIRLSMK (69 aa)). The interval 695 to 745 (QETGEDLTEKLKAERAERGEPEREERSDRGDRGDRGPRRDRGERRRESSGE) is disordered. The span at 701-745 (LTEKLKAERAERGEPEREERSDRGDRGDRGPRRDRGERRRESSGE) shows a compositional bias: basic and acidic residues.

Belongs to the polyribonucleotide nucleotidyltransferase family. Mg(2+) is required as a cofactor.

It localises to the cytoplasm. It catalyses the reaction RNA(n+1) + phosphate = RNA(n) + a ribonucleoside 5'-diphosphate. Its function is as follows. Involved in mRNA degradation. Catalyzes the phosphorolysis of single-stranded polyribonucleotides processively in the 3'- to 5'-direction. This is Polyribonucleotide nucleotidyltransferase from Methylorubrum extorquens (strain CM4 / NCIMB 13688) (Methylobacterium extorquens).